The following is a 223-amino-acid chain: Kinetochore protein Spc25 (223 aa).

A coiled-coil region spans residues Leu-65–Ser-115.

Belongs to the SPC25 family. As to quaternary structure, component of the Ndc80 complex, which is composed of Ndc80, Nuf2 and Spc25.

The protein localises to the nucleus. The protein resides in the chromosome. It localises to the centromere. It is found in the kinetochore. Functionally, acts as a component of the essential kinetochore-associated Ndc80 complex, which is required for chromosome segregation and spindle checkpoint activity during meiosis and mitosis. Required for kinetochore integrity and the organization of stable microtubule binding sites in the outer plate of the kinetochore. Participates in SAC signaling that responds specifically to disruptions in spindle microtubule dynamics. The NDC80 complex synergistically enhances the affinity of the SKA1 complex for microtubules and may allow the NDC80 complex to track depolymerizing microtubules. The sequence is that of Kinetochore protein Spc25 from Drosophila lutescens (Fruit fly).